The following is a 149-amino-acid chain: Small ribosomal subunit protein eS19 (149 aa).

This sequence belongs to the eukaryotic ribosomal protein eS19 family.

This Mya arenaria (Soft-shell clam) protein is Small ribosomal subunit protein eS19 (RPS19).